Reading from the N-terminus, the 344-residue chain is MPNCFKFHTVIERHWQKPYPVLSFLLKPLSGLFAKIAAKRRTDFLSGKRQSEKLPVPVVVVGNIHAGGTGKTPIVAALVSGLQEKGVKVGIISRGYGRKSKAVHVLNAESRAEDAGDEPLLLFRKTGAPTAVGSSRAEAGRALLAAHPDIGLIVADDGLQHYALRRDVEIAVFPAADTGRTDLDLLPNGSLREPLLRLDSVDAVVVSGGKADALFRPSENMFHSRIEAGRIYRLNNPSEILDTGRLKNQTVVAVAGIAKPARFFDSLRNMGITVKRTVALPDHADISAADLPDADAVIITEKDAVKFSDGICTDNVWVLPVCAIIEPDLAAFVLERLEDVPKAV.

65–72 (HAGGTGKT) lines the ATP pocket.

This sequence belongs to the LpxK family.

The catalysed reaction is a lipid A disaccharide + ATP = a lipid IVA + ADP + H(+). The protein operates within glycolipid biosynthesis; lipid IV(A) biosynthesis; lipid IV(A) from (3R)-3-hydroxytetradecanoyl-[acyl-carrier-protein] and UDP-N-acetyl-alpha-D-glucosamine: step 6/6. In terms of biological role, transfers the gamma-phosphate of ATP to the 4'-position of a tetraacyldisaccharide 1-phosphate intermediate (termed DS-1-P) to form tetraacyldisaccharide 1,4'-bis-phosphate (lipid IVA). The chain is Tetraacyldisaccharide 4'-kinase from Neisseria meningitidis serogroup B (strain ATCC BAA-335 / MC58).